A 307-amino-acid polypeptide reads, in one-letter code: 4-hydroxy-3-methylbut-2-enyl diphosphate reductase (307 aa).

Position 13 (Cys-13) interacts with [4Fe-4S] cluster. (2E)-4-hydroxy-3-methylbut-2-enyl diphosphate-binding residues include His-42 and His-75. His-42 and His-75 together coordinate dimethylallyl diphosphate. His-42 and His-75 together coordinate isopentenyl diphosphate. Cys-97 serves as a coordination point for [4Fe-4S] cluster. His-125 contacts (2E)-4-hydroxy-3-methylbut-2-enyl diphosphate. Residue His-125 participates in dimethylallyl diphosphate binding. His-125 lines the isopentenyl diphosphate pocket. The active-site Proton donor is the Glu-127. Thr-165 contacts (2E)-4-hydroxy-3-methylbut-2-enyl diphosphate. Residue Cys-195 participates in [4Fe-4S] cluster binding. (2E)-4-hydroxy-3-methylbut-2-enyl diphosphate-binding residues include Ser-223, Ser-224, Asn-225, and Ser-267. Dimethylallyl diphosphate is bound by residues Ser-223, Ser-224, Asn-225, and Ser-267. Isopentenyl diphosphate is bound by residues Ser-223, Ser-224, Asn-225, and Ser-267.

This sequence belongs to the IspH family. [4Fe-4S] cluster is required as a cofactor.

It carries out the reaction isopentenyl diphosphate + 2 oxidized [2Fe-2S]-[ferredoxin] + H2O = (2E)-4-hydroxy-3-methylbut-2-enyl diphosphate + 2 reduced [2Fe-2S]-[ferredoxin] + 2 H(+). The enzyme catalyses dimethylallyl diphosphate + 2 oxidized [2Fe-2S]-[ferredoxin] + H2O = (2E)-4-hydroxy-3-methylbut-2-enyl diphosphate + 2 reduced [2Fe-2S]-[ferredoxin] + 2 H(+). The protein operates within isoprenoid biosynthesis; dimethylallyl diphosphate biosynthesis; dimethylallyl diphosphate from (2E)-4-hydroxy-3-methylbutenyl diphosphate: step 1/1. Its pathway is isoprenoid biosynthesis; isopentenyl diphosphate biosynthesis via DXP pathway; isopentenyl diphosphate from 1-deoxy-D-xylulose 5-phosphate: step 6/6. Catalyzes the conversion of 1-hydroxy-2-methyl-2-(E)-butenyl 4-diphosphate (HMBPP) into a mixture of isopentenyl diphosphate (IPP) and dimethylallyl diphosphate (DMAPP). Acts in the terminal step of the DOXP/MEP pathway for isoprenoid precursor biosynthesis. The sequence is that of 4-hydroxy-3-methylbut-2-enyl diphosphate reductase from Chlamydia trachomatis serovar L2 (strain ATCC VR-902B / DSM 19102 / 434/Bu).